The chain runs to 469 residues: Arginine biosynthesis bifunctional protein ArgJ, mitochondrial (469 aa).

Positions 199, 228, 239, 325, 464, and 469 each coordinate substrate. Residue Thr-239 is the Nucleophile of the active site.

Belongs to the ArgJ family. As to quaternary structure, heterodimer of an alpha and a beta chain. Post-translationally, the alpha and beta chains are autoproteolytically processed from a single precursor protein within the mitochondrion.

The protein localises to the mitochondrion matrix. The enzyme catalyses N(2)-acetyl-L-ornithine + L-glutamate = N-acetyl-L-glutamate + L-ornithine. It catalyses the reaction L-glutamate + acetyl-CoA = N-acetyl-L-glutamate + CoA + H(+). The protein operates within amino-acid biosynthesis; L-arginine biosynthesis; L-ornithine and N-acetyl-L-glutamate from L-glutamate and N(2)-acetyl-L-ornithine (cyclic): step 1/1. It functions in the pathway amino-acid biosynthesis; L-arginine biosynthesis; N(2)-acetyl-L-ornithine from L-glutamate: step 1/4. Functionally, catalyzes two activities which are involved in the cyclic version of arginine biosynthesis: the synthesis of acetylglutamate from glutamate and acetyl-CoA, and of ornithine by transacetylation between acetylornithine and glutamate. This is Arginine biosynthesis bifunctional protein ArgJ, mitochondrial from Sordaria macrospora (strain ATCC MYA-333 / DSM 997 / K(L3346) / K-hell).